We begin with the raw amino-acid sequence, 427 residues long: MSYREYRDRVLNFIEDHEHWRAHTINLIASENVTSPSVTRAVASGFMHKYAEGWPRQRYYQGCKYVDEVELIGVELFTKLFGSDFADLRPISGTNANQAAFFGLTQPGDKAIVLHTSHGGHISHMPFGAAGMRGLEVHTWPFDNEAFNIDVDKAEKLIRELEPKIVVFGGSLFPFPHPVKELAPVAKEVGAYVMYDAAHVLGLIAGKQFQDPLREGADIITASTHKTFPGPQGGVILYKKFGETEEIAKLQWAIFPGVLSNHHLHHMAGKVITAAEMLEYGEKYAAQVVKNAKALAEALAEEGFKVIGEDKGYTESHQVIVDVSDLHPAAGGWAAPLLEEAGIILNKNLLPWDPLEKVNEPSGLRIGVQEMTRVGMFEDDMKEIAHFIRRVLIDKEDPKKVRRDVYGFRAEFQKVYYSFDHGLPLRE.

120–122 (GHI) contacts (6S)-5,6,7,8-tetrahydrofolate. An N6-(pyridoxal phosphate)lysine modification is found at lysine 226. Glutamate 243 contributes to the (6S)-5,6,7,8-tetrahydrofolate binding site.

The protein belongs to the SHMT family. As to quaternary structure, homodimer. Requires pyridoxal 5'-phosphate as cofactor.

It is found in the cytoplasm. It functions in the pathway amino-acid biosynthesis; glycine biosynthesis; glycine from L-serine: step 1/1. In terms of biological role, catalyzes the reversible interconversion of serine and glycine with a modified folate serving as the one-carbon carrier. Also exhibits a pteridine-independent aldolase activity toward beta-hydroxyamino acids, producing glycine and aldehydes, via a retro-aldol mechanism. This is Serine hydroxymethyltransferase from Thermococcus gammatolerans (strain DSM 15229 / JCM 11827 / EJ3).